Here is a 521-residue protein sequence, read N- to C-terminus: Cytochrome P450 monooxygenase bet2 (521 aa).

A helical membrane pass occupies residues 23–43 (SNWRFALFVAATLLTSYIVIV). Asn-188 carries an N-linked (GlcNAc...) asparagine glycan. Cys-461 serves as a coordination point for heme.

This sequence belongs to the cytochrome P450 family. The cofactor is heme.

The protein localises to the membrane. It carries out the reaction dehydroprobetaenone I + NADPH + O2 + H(+) = epoxybetaenone + NADP(+) + H2O. The enzyme catalyses dehydroprobetaenone I + 3 NADPH + 3 O2 + 3 H(+) = betaenone C + 3 NADP(+) + 3 H2O. The protein operates within mycotoxin biosynthesis. In terms of biological role, cytochrome P450 monooxygenase; part of the gene cluster that mediates the biosynthesis of betaenones, phytotoxic polyketides involved in leaf spot disease in sugar beets. The first step of the pathway is the synthesis of dehydroprobetaenone I by the polyketide synthase bet1 and the enoyl reductase bet3 via condensation of one acetyl-CoA starter unit with 7 malonyl-CoA units and 5 methylations. The C-terminal reductase (R) domain of bet1 catalyzes the reductive release of the polyketide chain. Because bet1 lacks a designated enoylreductase (ER) domain, the required activity is provided the enoyl reductase bet3. The short-chain dehydrogenase/reductase bet4 then catalyzes reduction of dehydroprobetaenone I to probetaenone I. The cytochrome P450 monooxygenase bet2 catalyzes successive epoxidation, oxidation (resulting from epoxide opening) and hydroxylation to install a tertiary alcohol in the decaline ring to yield betaenone C from dehydroprobetaenone I and betaenone B from probetaenone I. The FAD-linked oxidoreductase (orf1) is probably responsible for the conversion of betaenone C to betaenone A via an intramolecular aldol reaction between C-1 and C-17 to form the bridged tricyclic system in betaenone A. In Neocamarosporium betae (Beet black rot fungus), this protein is Cytochrome P450 monooxygenase bet2.